Reading from the N-terminus, the 439-residue chain is Tol-Pal system protein TolB (439 aa).

Residues 1–22 (MKKPLRWLAALTALLLPLSALA) form the signal peptide.

Belongs to the TolB family. As to quaternary structure, the Tol-Pal system is composed of five core proteins: the inner membrane proteins TolA, TolQ and TolR, the periplasmic protein TolB and the outer membrane protein Pal. They form a network linking the inner and outer membranes and the peptidoglycan layer.

It localises to the periplasm. Its function is as follows. Part of the Tol-Pal system, which plays a role in outer membrane invagination during cell division and is important for maintaining outer membrane integrity. The protein is Tol-Pal system protein TolB of Xanthomonas axonopodis pv. citri (strain 306).